The following is a 308-amino-acid chain: Porphobilinogen deaminase (308 aa).

Cysteine 240 carries the S-(dipyrrolylmethanemethyl)cysteine modification.

Belongs to the HMBS family. As to quaternary structure, monomer. Dipyrromethane is required as a cofactor.

It catalyses the reaction 4 porphobilinogen + H2O = hydroxymethylbilane + 4 NH4(+). The protein operates within porphyrin-containing compound metabolism; protoporphyrin-IX biosynthesis; coproporphyrinogen-III from 5-aminolevulinate: step 2/4. Functionally, tetrapolymerization of the monopyrrole PBG into the hydroxymethylbilane pre-uroporphyrinogen in several discrete steps. This Campylobacter hominis (strain ATCC BAA-381 / DSM 21671 / CCUG 45161 / LMG 19568 / NCTC 13146 / CH001A) protein is Porphobilinogen deaminase.